A 257-amino-acid chain; its full sequence is Snake venom serine protease rhinocerase 4 (257 aa).

Residues 1 to 17 form the signal peptide; that stretch reads VLIRVLANLLVLQLSYA. Positions 18 to 23 are excised as a propeptide; it reads QKSSEL. The 225-residue stretch at 24-248 folds into the Peptidase S1 domain; that stretch reads VIGGAECNIN…YTDWIRSIIG (225 aa). 6 cysteine pairs are disulfide-bonded: Cys-30–Cys-162, Cys-49–Cys-65, Cys-97–Cys-255, Cys-141–Cys-209, Cys-173–Cys-188, and Cys-199–Cys-224. A glycan (N-linked (GlcNAc...) asparagine) is linked at Asn-43. The active-site Charge relay system is the His-64. Asn-78 and Asn-100 each carry an N-linked (GlcNAc...) asparagine glycan. The active-site Charge relay system is the Asp-109. The active-site Charge relay system is Ser-203. N-linked (GlcNAc...) asparagine glycosylation is present at Asn-250.

Belongs to the peptidase S1 family. Snake venom subfamily. Expressed by the venom gland.

Its subcellular location is the secreted. In terms of biological role, snake venom serine protease that may act in the hemostasis system of the prey. In Bitis rhinoceros (West African gaboon viper), this protein is Snake venom serine protease rhinocerase 4.